The primary structure comprises 216 residues: MSDRQIKGILGTKLGMTQVFDDQNRVVPVTVVQAGPNVVTQIRTPEKDGYSAVQLAFGAIDPRKVNKPRTGHFTKAGVTPRRHVVELRTADAGEYEVGQEVTAEVFEAGTVVDVVGTSKGKGFAGTMKRHGFRGQGASHGTQAVHRKPGSIGGCATPGRVFKGMRMSGRMGSDRVTTQNLKVHRVEGESGLLLIKGAIPGPKGGLVLVKSPAKGGA.

A disordered region spans residues 132–157 (FRGQGASHGTQAVHRKPGSIGGCATP).

This sequence belongs to the universal ribosomal protein uL3 family. Part of the 50S ribosomal subunit. Forms a cluster with proteins L14 and L19.

Its function is as follows. One of the primary rRNA binding proteins, it binds directly near the 3'-end of the 23S rRNA, where it nucleates assembly of the 50S subunit. This Saccharopolyspora erythraea (strain ATCC 11635 / DSM 40517 / JCM 4748 / NBRC 13426 / NCIMB 8594 / NRRL 2338) protein is Large ribosomal subunit protein uL3.